The primary structure comprises 246 residues: 2-C-methyl-D-erythritol 4-phosphate cytidylyltransferase (246 aa).

This sequence belongs to the IspD/TarI cytidylyltransferase family. IspD subfamily.

The enzyme catalyses 2-C-methyl-D-erythritol 4-phosphate + CTP + H(+) = 4-CDP-2-C-methyl-D-erythritol + diphosphate. It functions in the pathway isoprenoid biosynthesis; isopentenyl diphosphate biosynthesis via DXP pathway; isopentenyl diphosphate from 1-deoxy-D-xylulose 5-phosphate: step 2/6. Functionally, catalyzes the formation of 4-diphosphocytidyl-2-C-methyl-D-erythritol from CTP and 2-C-methyl-D-erythritol 4-phosphate (MEP). The polypeptide is 2-C-methyl-D-erythritol 4-phosphate cytidylyltransferase (Clostridium tetani (strain Massachusetts / E88)).